The following is a 2590-amino-acid chain: DNA polymerase theta (2590 aa).

A compositionally biased stretch (basic residues) spans 1–12 (MNLLRRSGKRRR). The tract at residues 1 to 33 (MNLLRRSGKRRRSESGSDSFSGSGGDSSASPQF) is disordered. The span at 16–30 (GSDSFSGSGGDSSAS) shows a compositional bias: low complexity. Residues glutamine 96 and 115–122 (APTSAGKT) each bind ATP. A Helicase ATP-binding domain is found at 102 to 286 (LGQVLEGKNL…WLNAELYHTD (185 aa)). The interval 102 to 554 (LGQVLEGKNL…STSQDMHTYA (453 aa)) is helicase activity. Positions 216–219 (DELH) match the DEAH box motif. In terms of domain architecture, Helicase C-terminal spans 321 to 554 (GDEDHVVSLC…STSQDMHTYA (234 aa)). The segment at 847-894 (DEEEEAVEERRNMRTIWVTGRKGLTEREAAALIVEEARMILQQDLVEM) is interaction with RAD51. Position 990 is an N6-acetyllysine (lysine 990). The disordered stretch occupies residues 1034–1060 (KMSRSFRSWKRRKHLKRSRDSSPLKDS). The segment covering 1040 to 1050 (RSWKRRKHLKR) has biased composition (basic residues). 7 positions are modified to phosphoserine; by PLK1: serine 1289, serine 1482, serine 1486, serine 1488, serine 1493, serine 1555, and serine 1563. The segment at 1594–1622 (SDPVLDEHHQGDQDGGDQDERAEKSKLTG) is disordered. A compositionally biased stretch (basic and acidic residues) spans 1598–1619 (LDEHHQGDQDGGDQDERAEKSK). Serine 1628 and serine 1635 each carry phosphoserine; by PLK1. Phosphothreonine; by PLK1 is present on threonine 1755. The disordered stretch occupies residues 1777-1797 (PSDIKNHDLSPGSRNGFKDNS). A DNA polymerase activity region spans residues 2097-2584 (AECESQKHIM…KVKIGASWGE (488 aa)). Loop regions lie at residues 2142–2177 (KLPP…GRQF) and 2257–2322 (EIKM…VPFP). Mg(2+)-binding residues include aspartate 2330 and tyrosine 2331. Residues 2491 to 2535 (QLETFHSTFKSHGHREGMLQSDQTGLSRKRKLQGMFCPIRGGFFI) form a loop 3 region. Aspartate 2540 is a binding site for Mg(2+).

It belongs to the DNA polymerase type-A family. As to quaternary structure, homomultimer; forms homodimers and homotetramers. Interacts with RAD51. Interacts with ORC2 and ORC4. Interacts with RHNO1; interaction takes place during mitosis and promotes POLQ recruitment to DNA damage sites. Interacts (when phosphorylated) with TOPBP1 (via BRCT domains 7 and 8); promoting POLQ recruitment to DNA damage sites. Mg(2+) is required as a cofactor. Phosphorylated by PLK1; promoting interaction with TOPBP1 and recruitment to DNA damage sites. In terms of tissue distribution, highly expressed in testis.

Its subcellular location is the nucleus. The protein localises to the chromosome. It carries out the reaction DNA(n) + a 2'-deoxyribonucleoside 5'-triphosphate = DNA(n+1) + diphosphate. It catalyses the reaction ATP + H2O = ADP + phosphate + H(+). Its activity is regulated as follows. Specifically inhibited by the antibiotic novobiocin. The polymerase activity is specifically inhibited by the small molecule ART558. Novobiocin and ART558 confer specific killing of BRCA1/2-deficient cells and synergize with the poly [ADP-ribose] polymerase (PARP) inhibitor olaparib. In terms of biological role, low-fidelity DNA polymerase with a helicase activity that promotes microhomology-mediated end-joining (MMEJ), an alternative non-homologous end-joining (NHEJ) machinery required to repair double-strand breaks in DNA during mitosis. MMEJ is an error-prone repair pathway that produces deletions of sequences from the strand being repaired and promotes genomic rearrangements, such as telomere fusions, some of them leading to cellular transformation. MMEJ is required during mitosis to repair persistent double-strand breaks that originate in S-phase. Although error-prone, MMEJ protects against chromosomal instability and tumorigenesis. The polymerase acts by binding directly the 2 ends of resected double-strand breaks, allowing microhomologous sequences in the overhangs to form base pairs. It then extends each strand from the base-paired region using the opposing overhang as a template. Requires partially resected DNA containing 2 to 6 base pairs of microhomology to perform MMEJ. The polymerase lacks proofreading activity and is highly promiscuous: unlike most polymerases, promotes extension of ssDNA and partial ssDNA (pssDNA) substrates. When the ends of a break do not contain terminal microhomology must identify embedded complementary sequences through a scanning step. Also acts as a DNA helicase, promoting dissociation of the replication protein A complex (RPA/RP-A), composed of RPA1, RPA2 and RPA3, from resected double-strand breaks to allow their annealing and subsequent joining by MMEJ. Removal of RPA/RP-A complex proteins prevents RAD51 accumulation at resected ends, thereby inhibiting homology-recombination repair (HR) pathway. Also shows RNA-directed DNA polymerase activity to mediate DNA repair in vitro; however this activity needs additional evidence in vivo. May also have lyase activity. Involved in somatic hypermutation of immunoglobulin genes, a process that requires the activity of DNA polymerases to ultimately introduce mutations at both A/T and C/G base pairs. POLQ-mediated end joining activity is involved in random integration of exogenous DNA hampers. The sequence is that of DNA polymerase theta from Homo sapiens (Human).